Here is a 185-residue protein sequence, read N- to C-terminus: MSNEVLTQTKERMEKAVAAYSRELASVRAGRANPSLLDKVTVEYYGAQTPLNQLSSINVPEARMLVVTPYDKTAIGDIEKAILKADLGVTPTSDGTIIRIAIPALTEERRKELVKVVKKYAEEAKVAVRNVRRDSNDDLKKLEKNGDITEDELRASSEDVQKLTDEYVSKIDSVTKDKEKEIMEV.

Residues 136–155 (NDDLKKLEKNGDITEDELRA) are disordered.

It belongs to the RRF family.

It is found in the cytoplasm. Its function is as follows. Responsible for the release of ribosomes from messenger RNA at the termination of protein biosynthesis. May increase the efficiency of translation by recycling ribosomes from one round of translation to another. This Bacillus velezensis (strain DSM 23117 / BGSC 10A6 / LMG 26770 / FZB42) (Bacillus amyloliquefaciens subsp. plantarum) protein is Ribosome-recycling factor.